Reading from the N-terminus, the 498-residue chain is ATP synthase subunit beta, chloroplastic (498 aa).

Residue 172-179 (GGAGVGKT) participates in ATP binding.

It belongs to the ATPase alpha/beta chains family. As to quaternary structure, F-type ATPases have 2 components, CF(1) - the catalytic core - and CF(0) - the membrane proton channel. CF(1) has five subunits: alpha(3), beta(3), gamma(1), delta(1), epsilon(1). CF(0) has four main subunits: a(1), b(1), b'(1) and c(9-12).

It localises to the plastid. The protein resides in the chloroplast thylakoid membrane. The catalysed reaction is ATP + H2O + 4 H(+)(in) = ADP + phosphate + 5 H(+)(out). Produces ATP from ADP in the presence of a proton gradient across the membrane. The catalytic sites are hosted primarily by the beta subunits. The chain is ATP synthase subunit beta, chloroplastic from Populus alba (White poplar).